We begin with the raw amino-acid sequence, 620 residues long: Chaperone protein DnaK (620 aa).

The interval 579-620 is disordered; that stretch reads KAQKEASAGAEASEDASGPSSTGSASDDDVVDADYEVVDEDK. Low complexity predominate over residues 583 to 603; the sequence is EASAGAEASEDASGPSSTGSA. Over residues 604–620 the composition is skewed to acidic residues; the sequence is SDDDVVDADYEVVDEDK.

The protein belongs to the heat shock protein 70 family.

Its function is as follows. Acts as a chaperone. This chain is Chaperone protein DnaK, found in Methanococcoides burtonii (strain DSM 6242 / NBRC 107633 / OCM 468 / ACE-M).